Reading from the N-terminus, the 492-residue chain is Cytoplasmic dynein 1 light intermediate chain 2 (492 aa).

ATP is bound at residue 61-68 (GEDGSGKT). 3 disordered regions span residues 187 to 206 (PEEG…SGSD), 371 to 423 (AKQP…KNNA), and 437 to 492 (LSKK…ENEA). Ser-194 is modified (phosphoserine). A compositionally biased stretch (polar residues) spans 371-381 (AKQPATPTRAS). A phosphoserine mark is found at Ser-383 and Ser-391. Arg-397 bears the Omega-N-methylarginine mark. A Phosphothreonine modification is found at Thr-441. Residues Ser-443 and Ser-446 each carry the phosphoserine modification. Polar residues predominate over residues 452-469 (VQSTAKKSGQKTVLSNVQ). A compositionally biased stretch (basic and acidic residues) spans 471–480 (ELDRMTRKPD). The span at 482 to 492 (MVTNSSTENEA) shows a compositional bias: polar residues.

Belongs to the dynein light intermediate chain family. In terms of assembly, homodimer. The cytoplasmic dynein 1 complex consists of two catalytic heavy chains (HCs) and a number of non-catalytic subunits presented by intermediate chains (ICs), light intermediate chains (LICs) and light chains (LCs); the composition seems to vary in respect to the IC, LIC and LC composition. The heavy chain homodimer serves as a scaffold for the probable homodimeric assembly of the respective non-catalytic subunits. The ICs and LICs bind directly to the HC dimer and the LCs assemble on the IC dimer. Interacts with DYNC1H1; DYNC1LI1 and DYNC1LI2 bind mutually exclusive to DYNC1H.

Its subcellular location is the cytoplasm. The protein resides in the cytoskeleton. Acts as one of several non-catalytic accessory components of the cytoplasmic dynein 1 complex that are thought to be involved in linking dynein to cargos and to adapter proteins that regulate dynein function. Cytoplasmic dynein 1 acts as a motor for the intracellular retrograde motility of vesicles and organelles along microtubules. May play a role in binding dynein to membranous organelles or chromosomes. The sequence is that of Cytoplasmic dynein 1 light intermediate chain 2 (DYNC1LI2) from Pongo abelii (Sumatran orangutan).